A 232-amino-acid chain; its full sequence is Orotidine 5'-phosphate decarboxylase (232 aa).

Substrate-binding positions include D13, K35, 62-71 (DLKFHDIPNT), T122, R182, Q191, G211, and R212. The Proton donor role is filled by K64.

This sequence belongs to the OMP decarboxylase family. Type 1 subfamily. Homodimer.

It carries out the reaction orotidine 5'-phosphate + H(+) = UMP + CO2. Its pathway is pyrimidine metabolism; UMP biosynthesis via de novo pathway; UMP from orotate: step 2/2. In terms of biological role, catalyzes the decarboxylation of orotidine 5'-monophosphate (OMP) to uridine 5'-monophosphate (UMP). The polypeptide is Orotidine 5'-phosphate decarboxylase (Pseudomonas fluorescens (strain Pf0-1)).